Here is an 82-residue protein sequence, read N- to C-terminus: Cytochrome c oxidase-assembly factor cox-23, mitochondrial (82 aa).

Residues 1-27 are disordered; it reads MAQAGSENKEPWNEETRAKFEGKSRSE. Basic and acidic residues predominate over residues 7-27; that stretch reads ENKEPWNEETRAKFEGKSRSE. The region spanning 29-71 is the CHCH domain; sequence LDPCQEAAQRSIRCLHRNQGDRTMCSDYFEAYRECKKQWIERR. Short sequence motifs (cx9C motif) lie at residues 32 to 42 and 53 to 63; these read CQEAAQRSIRC and CSDYFEAYREC. 2 disulfides stabilise this stretch: cysteine 32–cysteine 63 and cysteine 42–cysteine 53.

Belongs to the COX23 family.

The protein localises to the mitochondrion intermembrane space. In terms of biological role, required for the assembly of cytochrome c oxidase. The polypeptide is Cytochrome c oxidase-assembly factor cox-23, mitochondrial (cox-23) (Neurospora crassa (strain ATCC 24698 / 74-OR23-1A / CBS 708.71 / DSM 1257 / FGSC 987)).